The primary structure comprises 455 residues: Argininosuccinate lyase (455 aa).

It belongs to the lyase 1 family. Argininosuccinate lyase subfamily.

Its subcellular location is the cytoplasm. The enzyme catalyses 2-(N(omega)-L-arginino)succinate = fumarate + L-arginine. It participates in amino-acid biosynthesis; L-arginine biosynthesis; L-arginine from L-ornithine and carbamoyl phosphate: step 3/3. The protein is Argininosuccinate lyase of Shewanella sp. (strain MR-7).